The chain runs to 312 residues: MFFHKKRDVHGLLLLDKPQGISSNNALQKVKMLFSAKKAGYIGTLDPLATGMLPICFGECSKFSHYLMESNKKYHVIAKLGEKTSTSDSDGIIIKKRPILINSFKIKSALKELTGLIEQIPPMYSAIKHNGVPLYKYARQGLNIKRSIRKVLIHDISSIHQEKNLIEFKIFCSKGTYVRTLVEDLGEKLGCGAHVIFLRRLEMASYLHSQLVTISYLHKLLRKEKNNNFNFFEKIDNLLMPIDSPVSFLPKVYLFPQQSYNFQLGQTVIFFSDIKNSLVRVIALENNKFIGLGRINTEELLIPYRLVSRSIN.

Asp46 functions as the Nucleophile in the catalytic mechanism. Substrate-binding residues include Tyr74, Tyr177, and Leu198.

This sequence belongs to the pseudouridine synthase TruB family. Type 1 subfamily.

It catalyses the reaction uridine(55) in tRNA = pseudouridine(55) in tRNA. In terms of biological role, responsible for synthesis of pseudouridine from uracil-55 in the psi GC loop of transfer RNAs. This is tRNA pseudouridine synthase B from Buchnera aphidicola subsp. Acyrthosiphon pisum (strain APS) (Acyrthosiphon pisum symbiotic bacterium).